Reading from the N-terminus, the 156-residue chain is Small ribosomal subunit protein uS7 (156 aa).

Belongs to the universal ribosomal protein uS7 family. As to quaternary structure, part of the 30S ribosomal subunit. Contacts proteins S9 and S11.

Its function is as follows. One of the primary rRNA binding proteins, it binds directly to 16S rRNA where it nucleates assembly of the head domain of the 30S subunit. Is located at the subunit interface close to the decoding center, probably blocks exit of the E-site tRNA. The sequence is that of Small ribosomal subunit protein uS7 from Buchnera aphidicola subsp. Cinara cedri (strain Cc).